The chain runs to 126 residues: Anti-adapter protein IraD (126 aa).

This sequence belongs to the GpW/Gp25 family. IraD subfamily. As to quaternary structure, interacts with RssB.

The protein localises to the cytoplasm. Functionally, inhibits RpoS proteolysis by regulating RssB activity, thereby increasing the stability of the sigma stress factor RpoS during oxidative stress. Its effect on RpoS stability is due to its interaction with RssB, which probably blocks the interaction of RssB with RpoS, and the consequent delivery of the RssB-RpoS complex to the ClpXP protein degradation pathway. This chain is Anti-adapter protein IraD, found in Salmonella paratyphi A (strain ATCC 9150 / SARB42).